We begin with the raw amino-acid sequence, 216 residues long: uncharacterized protein (216 aa).

This is an uncharacterized protein from Archaeoglobus fulgidus (strain ATCC 49558 / DSM 4304 / JCM 9628 / NBRC 100126 / VC-16).